The chain runs to 679 residues: UvrABC system protein B (679 aa).

One can recognise a Helicase ATP-binding domain in the interval 25 to 176 (KGVNTGKEFQ…NLRSYLRSLV (152 aa)). 38 to 45 (GATGTGKT) contacts ATP. Residues 91-114 (YYDYYQPEAYVPVSDTYIAKTASI) carry the Beta-hairpin motif. Residues 429-583 (QIEDLLSEIR…KKYNQVNGIT (155 aa)) form the Helicase C-terminal domain. In terms of domain architecture, UVR spans 639–674 (PDLIEKLEIKMKDAAKELNFEEAANLRDRIKKLRQK).

This sequence belongs to the UvrB family. In terms of assembly, forms a heterotetramer with UvrA during the search for lesions. Interacts with UvrC in an incision complex.

It localises to the cytoplasm. The UvrABC repair system catalyzes the recognition and processing of DNA lesions. A damage recognition complex composed of 2 UvrA and 2 UvrB subunits scans DNA for abnormalities. Upon binding of the UvrA(2)B(2) complex to a putative damaged site, the DNA wraps around one UvrB monomer. DNA wrap is dependent on ATP binding by UvrB and probably causes local melting of the DNA helix, facilitating insertion of UvrB beta-hairpin between the DNA strands. Then UvrB probes one DNA strand for the presence of a lesion. If a lesion is found the UvrA subunits dissociate and the UvrB-DNA preincision complex is formed. This complex is subsequently bound by UvrC and the second UvrB is released. If no lesion is found, the DNA wraps around the other UvrB subunit that will check the other stand for damage. The polypeptide is UvrABC system protein B (Prochlorococcus marinus (strain MIT 9301)).